The following is a 264-amino-acid chain: Apolipoprotein A-I (264 aa).

Positions 1-18 (MKTVVLAVAVLFLTGSQA) are cleaved as a signal peptide. 2 consecutive repeat copies span residues 67–88 (LNLL…EQLG) and 89–110 (PVTQ…REMN). The tract at residues 67–264 (LNLLENWDTL…EEASKKLNAQ (198 aa)) is 10 X approximate tandem repeats. At methionine 109 the chain carries Methionine sulfoxide. The 3; half-length repeat unit spans residues 111-121 (KDLEEVKAKVQ). A run of 5 repeats spans residues 122–143 (PYLD…QKME), 144–165 (PLGA…EKLT), 166–187 (PLGE…TKMT), 188–207 (PYSD…LKDS), and 208–229 (PTLA…EKAK). Methionine 193 carries the methionine sulfoxide modification. Residues 230–240 (PALEDLRQGLM) form a 9; half-length repeat. A Methionine sulfoxide modification is found at methionine 240. The stretch at 241 to 264 (PVFESFKTRIMSMVEEASKKLNAQ) is repeat 10.

It belongs to the apolipoprotein A1/A4/E family. In terms of assembly, homodimer. Interacts with APOA1BP and CLU. Component of a sperm activating protein complex (SPAP), consisting of APOA1, an immunoglobulin heavy chain, an immunoglobulin light chain and albumin. Interacts with NDRG1. Interacts with SCGB3A2. Interacts with NAXE and YJEFN3. Glycosylated. Post-translationally, palmitoylated. In terms of processing, phosphorylation sites are present in the extracellular medium. In terms of tissue distribution, major protein of plasma HDL, also found in chylomicrons.

It is found in the secreted. Its function is as follows. Participates in the reverse transport of cholesterol from tissues to the liver for excretion by promoting cholesterol efflux from tissues and by acting as a cofactor for the lecithin cholesterol acyltransferase (LCAT). As part of the SPAP complex, activates spermatozoa motility. This chain is Apolipoprotein A-I (APOAI), found in Mesocricetus auratus (Golden hamster).